The chain runs to 100 residues: Small ribosomal subunit protein bS6 (100 aa).

It belongs to the bacterial ribosomal protein bS6 family.

Its function is as follows. Binds together with bS18 to 16S ribosomal RNA. This is Small ribosomal subunit protein bS6 from Enterococcus faecalis (strain ATCC 700802 / V583).